A 541-amino-acid chain; its full sequence is Glucose-6-phosphate isomerase (541 aa).

The active-site Proton donor is the glutamate 353. Active-site residues include histidine 384 and lysine 504.

The protein belongs to the GPI family.

The protein resides in the cytoplasm. It catalyses the reaction alpha-D-glucose 6-phosphate = beta-D-fructose 6-phosphate. Its pathway is carbohydrate biosynthesis; gluconeogenesis. The protein operates within carbohydrate degradation; glycolysis; D-glyceraldehyde 3-phosphate and glycerone phosphate from D-glucose: step 2/4. Its function is as follows. Catalyzes the reversible isomerization of glucose-6-phosphate to fructose-6-phosphate. This is Glucose-6-phosphate isomerase from Deinococcus radiodurans (strain ATCC 13939 / DSM 20539 / JCM 16871 / CCUG 27074 / LMG 4051 / NBRC 15346 / NCIMB 9279 / VKM B-1422 / R1).